The primary structure comprises 600 residues: Elongation factor 4 (600 aa).

The tr-type G domain occupies 4-186; sequence SKIRNFSIIA…AIVDKIPPPS (183 aa). Residues 16 to 21 and 133 to 136 contribute to the GTP site; these read DHGKST and NKID.

The protein belongs to the TRAFAC class translation factor GTPase superfamily. Classic translation factor GTPase family. LepA subfamily.

Its subcellular location is the cell membrane. It carries out the reaction GTP + H2O = GDP + phosphate + H(+). Required for accurate and efficient protein synthesis under certain stress conditions. May act as a fidelity factor of the translation reaction, by catalyzing a one-codon backward translocation of tRNAs on improperly translocated ribosomes. Back-translocation proceeds from a post-translocation (POST) complex to a pre-translocation (PRE) complex, thus giving elongation factor G a second chance to translocate the tRNAs correctly. Binds to ribosomes in a GTP-dependent manner. This Mycoplasma capricolum subsp. capricolum (strain California kid / ATCC 27343 / NCTC 10154) protein is Elongation factor 4.